The chain runs to 634 residues: DNA-directed RNA polymerase subunit gamma (634 aa).

Residues C74, C76, C89, and C92 each coordinate Zn(2+). Mg(2+) contacts are provided by D471, D473, and D475.

Belongs to the RNA polymerase beta' chain family. RpoC1 subfamily. As to quaternary structure, in cyanobacteria the RNAP catalytic core is composed of 2 alpha, 1 beta, 1 beta', 1 gamma and 1 omega subunit. When a sigma factor is associated with the core the holoenzyme is formed, which can initiate transcription. The cofactor is Mg(2+). Zn(2+) serves as cofactor.

It catalyses the reaction RNA(n) + a ribonucleoside 5'-triphosphate = RNA(n+1) + diphosphate. Its function is as follows. DNA-dependent RNA polymerase catalyzes the transcription of DNA into RNA using the four ribonucleoside triphosphates as substrates. The protein is DNA-directed RNA polymerase subunit gamma of Synechococcus sp. (strain WH7803).